The sequence spans 635 residues: Threonine--tRNA ligase (635 aa).

An editing domain region spans residues 1–144 (MQLLLIHSDY…RSIRPEGTQR (144 aa)). The tract at residues 215 to 514 (PHVELMRRLE…TEEGKVPMLP (300 aa)) is catalytic. Positions 307, 359, and 483 each coordinate Zn(2+).

This sequence belongs to the class-II aminoacyl-tRNA synthetase family. Homodimer. Zn(2+) serves as cofactor.

It is found in the cytoplasm. The enzyme catalyses tRNA(Thr) + L-threonine + ATP = L-threonyl-tRNA(Thr) + AMP + diphosphate + H(+). Its function is as follows. Catalyzes the attachment of threonine to tRNA(Thr) in a two-step reaction: L-threonine is first activated by ATP to form Thr-AMP and then transferred to the acceptor end of tRNA(Thr). Also edits incorrectly charged L-seryl-tRNA(Thr). In Methanosarcina barkeri (strain Fusaro / DSM 804), this protein is Threonine--tRNA ligase.